The sequence spans 473 residues: 3-isopropylmalate dehydratase large subunit (473 aa).

[4Fe-4S] cluster contacts are provided by Cys-348, Cys-408, and Cys-411. The disordered stretch occupies residues 421–440; it reads GDEASASSSNRNFIGRQGSK.

It belongs to the aconitase/IPM isomerase family. LeuC type 1 subfamily. As to quaternary structure, heterodimer of LeuC and LeuD. It depends on [4Fe-4S] cluster as a cofactor.

The enzyme catalyses (2R,3S)-3-isopropylmalate = (2S)-2-isopropylmalate. It participates in amino-acid biosynthesis; L-leucine biosynthesis; L-leucine from 3-methyl-2-oxobutanoate: step 2/4. Catalyzes the isomerization between 2-isopropylmalate and 3-isopropylmalate, via the formation of 2-isopropylmaleate. In Haloferax volcanii (strain ATCC 29605 / DSM 3757 / JCM 8879 / NBRC 14742 / NCIMB 2012 / VKM B-1768 / DS2) (Halobacterium volcanii), this protein is 3-isopropylmalate dehydratase large subunit.